Consider the following 443-residue polypeptide: Serine transporter (443 aa).

Helical transmembrane passes span T38–V60, L65–I87, W111–S131, G150–S170, G183–W203, G215–I235, I265–M285, V319–F339, G368–L388, F390–V410, and M422–F442.

Belongs to the amino acid/polyamine transporter 2 family. SdaC/TdcC subfamily.

It is found in the cell inner membrane. Transports both D- and L-serine; allows growth of strain CFT073 cells normally unable to transport D-serine on that substrate. Transport relies on the H(+) gradient and is not competed by L-threonine. May play a role in L-cysteine detoxification. This is Serine transporter from Escherichia coli O157:H7.